A 54-amino-acid chain; its full sequence is U7-ctenitoxin-Pk1a (54 aa).

Cystine bridges form between cysteine 3–cysteine 17, cysteine 10–cysteine 23, cysteine 14–cysteine 52, cysteine 16–cysteine 37, and cysteine 25–cysteine 35.

In terms of tissue distribution, expressed by the venom gland.

Its subcellular location is the secreted. In terms of biological role, blocks voltage-gated sodium channels (Nav). Causes immediate spastic paralysis and death in mice within 1 minute of injection at dose levels of 1.5 ug per mouse. The sequence is that of U7-ctenitoxin-Pk1a from Phoneutria keyserlingi (Brazilian wandering spider).